The sequence spans 321 residues: Genome polyprotein (321 aa).

The Cytoplasmic portion of the chain corresponds to 1 to 52 (RNLGKVIDTLTCGFADLMGYIPLVGAPLGGAARALAHGVRVLEDGVNYATGN). Residues 6–57 (VIDTLTCGFADLMGYIPLVGAPLGGAARALAHGVRVLEDGVNYATGNLPGCS) form an interaction with APOA2 region. Positions 48 to 51 (YATG) are important for lipid droplets localization. A helical membrane pass occupies residues 53–73 (LPGCSFSLFLLALLSCLTVPA). The propeptide at 62–75 (LLALLSCLTVPASA) is ER anchor for the core protein, removed in mature form by host signal peptidase. Topologically, residues 74–242 (SAYQVRNSTG…AGAHWGVLAG (169 aa)) are lumenal. N-linked (GlcNAc...) asparagine; by host glycosylation is found at Asn-80, Asn-93, and Asn-118. The interval 149-180 (LVGSATLCSALYVGDLCGSIFLVGQLFTFSPR) is important for fusion. An N-linked (GlcNAc...) asparagine; by host glycan is attached at Asn-189. Residues 243 to 263 (IAYFSMVGNWAKVLVVLLLFA) traverse the membrane as a helical segment. Residues 264–321 (GVDAETTVTGGSAAHGALGIASLFNQGARQNIQLINTNGSWHINSTALNCNDSLNTGW) are Lumenal-facing. Positions 268–294 (ETTVTGGSAAHGALGIASLFNQGARQN) are HVR1. Residues Asn-301, Asn-307, and Asn-314 are each glycosylated (N-linked (GlcNAc...) (high mannose) asparagine; by host).

This sequence belongs to the hepacivirus polyprotein family. As to quaternary structure, homooligomer. Interacts with E1 (via C-terminus). Interacts with the non-structural protein 5A. Interacts (via N-terminus) with host STAT1 (via SH2 domain); this interaction results in decreased STAT1 phosphorylation and ubiquitin-mediated proteasome-dependent STAT1 degradation, leading to decreased IFN-stimulated gene transcription. Interacts with host STAT3; this interaction constitutively activates STAT3. Interacts with host LTBR receptor. Interacts with host TNFRSF1A receptor and possibly induces apoptosis. Interacts with host HNRPK. Interacts with host YWHAE. Interacts with host UBE3A/E6AP. Interacts with host DDX3X. Interacts with host APOA2. Interacts with host RXRA protein. Interacts with host SP110 isoform 3/Sp110b; this interaction sequesters the transcriptional corepressor SP110 away from the nucleus. Interacts with host CREB3 nuclear transcription protein; this interaction triggers cell transformation. Interacts with host ACY3. Interacts with host C1QR1. Interacts with host RBM24; this interaction, which enhances the interaction of the mature core protein with 5'-UTR, may inhibit viral translation and favor replication. Interacts with host EIF2AK2/PKR; this interaction induces the autophosphorylation of EIF2AK2. Part of the viral assembly initiation complex composed of NS2, E1, E2, NS3, NS4A, NS5A and the mature core protein. Forms a heterodimer with envelope glycoprotein E2. Interacts with mature core protein. Interacts with protease NS2. The heterodimer E1/E2 interacts with host CLDN1; this interaction plays a role in viral entry into host cell. Interacts with host SPSB2 (via C-terminus). Part of the viral assembly initiation complex composed of NS2, E1, E2, NS3, NS4A, NS5A and the mature core protein. In terms of assembly, forms a heterodimer with envelope glycoprotein E1. Interacts with host CD81 and SCARB1 receptors; these interactions play a role in viral entry into host cell. Interacts with host EIF2AK2/PKR; this interaction inhibits EIF2AK2 and probably allows the virus to evade the innate immune response. Interacts with host CD209/DC-SIGN and CLEC4M/DC-SIGNR. Interact with host SPCS1; this interaction is essential for viral particle assembly. Interacts with protease NS2. The heterodimer E1/E2 interacts with host CLDN1; this interaction plays a role in viral entry into host cell. Part of the viral assembly initiation complex composed of NS2, E1, E2, NS3, NS4A, NS5A and the mature core protein. In terms of processing, specific enzymatic cleavages in vivo yield mature proteins. The structural proteins, core, E1, E2 and p7 are produced by proteolytic processing by host signal peptidases. The core protein precursor is synthesized as a 23 kDa, which is retained in the ER membrane through the hydrophobic signal peptide. Cleavage by the signal peptidase releases the 21 kDa mature core protein. The cleavage of the core protein precursor occurs between aminoacids 176 and 188 but the exact cleavage site is not known. Some degraded forms of the core protein appear as well during the course of infection. The other proteins (p7, NS2, NS3, NS4A, NS4B, NS5A and NS5B) are cleaved by the viral proteases. Autoprocessing between NS2 and NS3 is mediated by the NS2 cysteine protease catalytic domain and regulated by the NS3 N-terminal domain. Phosphorylated by host PKC and PKA. Post-translationally, ubiquitinated; mediated by UBE3A and leading to core protein subsequent proteasomal degradation. In terms of processing, highly N-glycosylated.

The protein resides in the host endoplasmic reticulum membrane. Its subcellular location is the host mitochondrion membrane. It localises to the virion. The protein localises to the host cytoplasm. It is found in the host nucleus. The protein resides in the host lipid droplet. Its subcellular location is the virion membrane. Functionally, packages viral RNA to form a viral nucleocapsid, and promotes virion budding. Participates in the viral particle production as a result of its interaction with the non-structural protein 5A. Binds RNA and may function as a RNA chaperone to induce the RNA structural rearrangements taking place during virus replication. Modulates viral translation initiation by interacting with viral IRES and 40S ribosomal subunit. Affects various cell signaling pathways, host immunity and lipid metabolism. Prevents the establishment of cellular antiviral state by blocking the interferon-alpha/beta (IFN-alpha/beta) and IFN-gamma signaling pathways and by blocking the formation of phosphorylated STAT1 and promoting ubiquitin-mediated proteasome-dependent degradation of STAT1. Activates STAT3 leading to cellular transformation. Regulates the activity of cellular genes, including c-myc and c-fos. May repress the promoter of p53, and sequester CREB3 and SP110 isoform 3/Sp110b in the cytoplasm. Represses cell cycle negative regulating factor CDKN1A, thereby interrupting an important check point of normal cell cycle regulation. Targets transcription factors involved in the regulation of inflammatory responses and in the immune response: suppresses TNF-induced NF-kappa-B activation, and activates AP-1. Binds to dendritic cells (DCs) via C1QR1, resulting in down-regulation of T-lymphocytes proliferation. Alters lipid metabolism by interacting with hepatocellular proteins involved in lipid accumulation and storage. Induces up-regulation of FAS promoter activity, and thereby contributes to the increased triglyceride accumulation in hepatocytes (steatosis). Its function is as follows. Forms a heterodimer with envelope glycoprotein E2, which mediates virus attachment to the host cell, virion internalization through clathrin-dependent endocytosis and fusion with host membrane. Fusion with the host cell is most likely mediated by both E1 and E2, through conformational rearrangements of the heterodimer required for fusion rather than a classical class II fusion mechanism. E1/E2 heterodimer binds host apolipoproteins such as APOB and ApoE thereby forming a lipo-viro-particle (LVP). APOE associated to the LVP allows the initial virus attachment to cell surface receptors such as the heparan sulfate proteoglycans (HSPGs), syndecan-1 (SDC1), syndecan-1 (SDC2), the low-density lipoprotein receptor (LDLR) and scavenger receptor class B type I (SCARB1). The cholesterol transfer activity of SCARB1 allows E2 exposure and binding of E2 to SCARB1 and the tetraspanin CD81. E1/E2 heterodimer binding on CD81 activates the epithelial growth factor receptor (EGFR) signaling pathway. Diffusion of the complex E1-E2-EGFR-SCARB1-CD81 to the cell lateral membrane allows further interaction with Claudin 1 (CLDN1) and occludin (OCLN) to finally trigger HCV entry. In terms of biological role, forms a heterodimer with envelope glycoprotein E1, which mediates virus attachment to the host cell, virion internalization through clathrin-dependent endocytosis and fusion with host membrane. Fusion with the host cell is most likely mediated by both E1 and E2, through conformational rearrangements of the heterodimer required for fusion rather than a classical class II fusion mechanism. The interaction between envelope glycoprotein E2 and host apolipoprotein E/APOE allows the proper assembly, maturation and infectivity of the viral particles. This interaction is probably promoted via the up-regulation of cellular autophagy by the virus. E1/E2 heterodimer binds host apolipoproteins such as APOB and APOE thereby forming a lipo-viro-particle (LVP). APOE associated to the LVP allows the initial virus attachment to cell surface receptors such as the heparan sulfate proteoglycans (HSPGs), syndecan-1 (SDC1), syndecan-1 (SDC2), the low-density lipoprotein receptor (LDLR) and scavenger receptor class B type I (SCARB1). The cholesterol transfer activity of SCARB1 allows E2 exposure and binding of E2 to SCARB1 and the tetraspanin CD81. E1/E2 heterodimer binding on CD81 activates the epithelial growth factor receptor (EGFR) signaling pathway. Diffusion of the complex E1-E2-EGFR-SCARB1-CD81 to the cell lateral membrane allows further interaction with Claudin 1 (CLDN1) and occludin (OCLN) to finally trigger HCV entry. Inhibits host EIF2AK2/PKR activation, preventing the establishment of an antiviral state. Viral ligand for CD209/DC-SIGN and CLEC4M/DC-SIGNR, which are respectively found on dendritic cells (DCs), and on liver sinusoidal endothelial cells and macrophage-like cells of lymph node sinuses. These interactions allow the capture of circulating HCV particles by these cells and subsequent facilitated transmission to permissive cells such as hepatocytes and lymphocyte subpopulations. The chain is Genome polyprotein from Homo sapiens (Human).